A 331-amino-acid chain; its full sequence is MALPEFTMRQLLEAGVHFGHQSHRWNPKMAEYIFGARNNIHIIDLAQTVPLMHRALQAISDTVAKGGRVLFVGTKRQAQDAVADAAKRSAQYFVNSRWLGGTLTNWKTISGSIKRLRHLDDVLNSGDASAYTKKERLTLQRERDKLDRSLGGIKDMGGLPDLIFVIDTNKEDIAIQEAQRLGIPVAAIVDTNCDPKGITYLVPGNDDAGRAISLYCDLIARAVIDGISRAQGESGIDIGASSRPPREDLPAAQATGFQGLSGPRGTPDDLKKLAGVSGDIEKKFNDLGIFHYWQLAELNADTAHQIGEEVGLPGRVDGWVAQAKGLTAEAE.

It belongs to the universal ribosomal protein uS2 family.

The polypeptide is Small ribosomal subunit protein uS2 (Rhodopseudomonas palustris (strain HaA2)).